The sequence spans 888 residues: Transmembrane channel-like protein 2 (888 aa).

Positions 1 to 128 (MSPQLKSLDE…SLGSSVSTGD (128 aa)) are disordered. At 1–228 (MSPQLKSLDE…KIKDIESHFG (228 aa)) the chain is on the cytoplasmic side. Basic and acidic residues-rich tracts occupy residues 7 to 16 (SLDEEGDKSA), 32 to 44 (DGHR…KDPA), and 87 to 110 (RTSL…EAGK). Polar residues predominate over residues 117–128 (STSLGSSVSTGD). Residues 229–266 (SSVASYFIFLRWMYGVNLVLFGLIFGLVIIPEVLMGMP) form a helical membrane-spanning segment. Topologically, residues 267 to 317 (YGSIPRKTVPRAEEERAMDFSVLWDFEGYIKYSALFYGYYNNQRTIGWLRY) are extracellular. Residues 318–350 (RLPMAYFMVGVSVFGYSLMIVIRSMASNTQGST) traverse the membrane as a helical segment. Residues 351–406 (SEGDSDSFTFSFKMFTSWDYLIGNSETADNKYVSITTSFKESIVDEQESNKEGNIH) are Cytoplasmic-facing. A helical membrane pass occupies residues 407–437 (LTRFLRVLANFLILCCLCGSGYLIYFVVKRS). At 438 to 447 (QEFSKMQNVS) the chain is on the extracellular side. The helical transmembrane segment at 448–475 (WYERNEVEIVMSLLGMFCPPLFETIAAL) threads the bilayer. The Cytoplasmic segment spans residues 476–479 (ENYH). The helical transmembrane segment at 480–514 (PRTGLKWQLGRIFALFLGNLYTFLLALMDDVHLKL) threads the bilayer. Residues 515–556 (SNEEKIKNITHWTLFNYYNSSGGNESVPRPPPHPADVPRGSC) lie on the Extracellular side of the membrane. The helical transmembrane segment at 557–594 (WETAVGIEFMRLTVSDMLVTYLTILVGDFLRACFVRFM) threads the bilayer. Residues 595 to 613 (NHCWCWDLEAGFPSYAEFD) lie on the Cytoplasmic side of the membrane. A helical membrane pass occupies residues 614-634 (ISGNVLGLIFNQGMIWMGSFY). Residues 635–637 (APG) are Extracellular-facing. Residues 638 to 660 (LVGINVLRLLTSMYFQCWAVMSS) form a helical membrane-spanning segment. At 661-674 (NVPHERVFKASRSN) the chain is on the cytoplasmic side. The helical transmembrane segment at 675 to 698 (NFYMGLLLLVLFLSLLPVAYTVMS) threads the bilayer. Residues 699–741 (LPPSFDCGPFSGKNRMYDVLHETIENDFPKFLGKIFAFLANPG) lie on the Extracellular side of the membrane. A helical membrane pass occupies residues 742 to 775 (LIIPAILLMFLAIYYLNSVSKSLSRANAQLRKKI). At 776 to 888 (QALREVEKNH…SGKRTQRPHN (113 aa)) the chain is on the cytoplasmic side. The segment at 813–888 (LTKEEPTSHS…SGKRTQRPHN (76 aa)) is disordered. Polar residues-rich tracts occupy residues 836 to 851 (PHTS…STSW) and 866 to 881 (GQPQ…PSGK).

The protein belongs to the TMC family. In terms of assembly, forms the MET channel composed of TMC dimer (TMC1 or TMC2), TMIE, TOMT, CIB (CIB2 or CIB3), LHFPL5 and PDH15. The interaction of TMC1 and TMC2 with TOMT is required for the transportation of TMC1/2 into the stereocilia of hair cells. Interacts (via N-terminus) with both isoforms CD1 and CD3 of PCDH15. Can form a heterodimer with TMC1, TMC5 or TMC7. In terms of tissue distribution, inner ear and testis. Expressed in cochlear inner and outer hair cells and vestibular organ hair cells.

Its subcellular location is the cell membrane. It catalyses the reaction Ca(2+)(in) = Ca(2+)(out). Functionally, pore-forming subunit of the mechanotransducer (MET) non-selective cation channel complex located at the tips of stereocilia of cochlear hair cells and that mediates sensory transduction in the auditory system. The MET complex is composed of two dimeric pore-forming ion-conducting transmembrane TMC (TMC1 or TMC2) subunits, several auxiliary proteins including LHFPL5, TMIE, CIB2/3 and TOMT, the tip-link PCDH15, and possibly the PIEZO subunits. MET channel is activated by tension in the tip-link extending from the side wall of one stereocilium to the tip of the adjacent shorter stereocilium, where the channel is located. TMC2 MET channel is highly permeable to calcium and likely transports monovalent cations. Also involved in vestibular hair cell transduction current of the mammalian inner ear. The polypeptide is Transmembrane channel-like protein 2 (Mus musculus (Mouse)).